The chain runs to 133 residues: UPF0225 protein BB3385 (133 aa).

The protein belongs to the UPF0225 family.

The chain is UPF0225 protein BB3385 from Bordetella bronchiseptica (strain ATCC BAA-588 / NCTC 13252 / RB50) (Alcaligenes bronchisepticus).